The chain runs to 355 residues: MAASHALKPILELLPEELPGEGYRRAQIAHWLYAKGARDFSEMTDLPKALREALAREWRLSEFSLVQAFPSQDGSVKYLFTLLDGKKTEAVYMPYENRKTVCLSTMVGCPAGCTFCATGALGFGRNLTAAEILDQLLTIAYHQGLSPREIRNVVLMGMGEPLLNLRNVLKAVRIMLHKKALALSPRRVTLSTVGIPKGIYRLAEEDLGVRLALSLHAPDDETRRKIIPTAHRYPIAEIMEAVRHYHAKTKRRVTFEYTLLKGVNDHLWQARLLAKLLKGLSAHVNLIPFNPWEGAPVAGTPKAGVLAFAEELKRLGVPTSIRWSRGQDVGAACGQLALKVPRPLTLTPLPEGAGR.

The Proton acceptor role is filled by E89. The region spanning 95–322 is the Radical SAM core domain; the sequence is YENRKTVCLS…KRLGVPTSIR (228 aa). An intrachain disulfide couples C102 to C333. 3 residues coordinate [4Fe-4S] cluster: C109, C113, and C116. S-adenosyl-L-methionine-binding positions include 159–160, S191, 214–216, and N290; these read GE and SLH. The active-site S-methylcysteine intermediate is the C333.

It belongs to the radical SAM superfamily. RlmN family. [4Fe-4S] cluster serves as cofactor.

The protein resides in the cytoplasm. It catalyses the reaction adenosine(2503) in 23S rRNA + 2 reduced [2Fe-2S]-[ferredoxin] + 2 S-adenosyl-L-methionine = 2-methyladenosine(2503) in 23S rRNA + 5'-deoxyadenosine + L-methionine + 2 oxidized [2Fe-2S]-[ferredoxin] + S-adenosyl-L-homocysteine. The enzyme catalyses adenosine(37) in tRNA + 2 reduced [2Fe-2S]-[ferredoxin] + 2 S-adenosyl-L-methionine = 2-methyladenosine(37) in tRNA + 5'-deoxyadenosine + L-methionine + 2 oxidized [2Fe-2S]-[ferredoxin] + S-adenosyl-L-homocysteine. Its function is as follows. Specifically methylates position 2 of adenine 2503 in 23S rRNA and position 2 of adenine 37 in tRNAs. The polypeptide is Probable dual-specificity RNA methyltransferase RlmN (Thermus thermophilus (strain ATCC BAA-163 / DSM 7039 / HB27)).